Consider the following 657-residue polypeptide: Glycogen debranching enzyme (657 aa).

Asp336 functions as the Nucleophile in the catalytic mechanism. The active-site Proton donor is Glu371. Basic and acidic residues predominate over residues 458 to 467 (NEANGEENRD). A disordered region spans residues 458 to 479 (NEANGEENRDGTNNNYSNNHGK).

This sequence belongs to the glycosyl hydrolase 13 family.

The catalysed reaction is Hydrolysis of (1-&gt;6)-alpha-D-glucosidic linkages to branches with degrees of polymerization of three or four glucose residues in limit dextrin.. Its pathway is glycan degradation; glycogen degradation. Its function is as follows. Removes maltotriose and maltotetraose chains that are attached by 1,6-alpha-linkage to the limit dextrin main chain, generating a debranched limit dextrin. The sequence is that of Glycogen debranching enzyme from Escherichia coli O139:H28 (strain E24377A / ETEC).